A 1311-amino-acid chain; its full sequence is AF4/FMR2 family member 2 (1311 aa).

Disordered regions lie at residues 94–187, 204–229, and 377–417; these read LVGI…LTQD, PQIG…GEDA, and TAGH…TKSV. Residues 101 to 111 are compositionally biased toward polar residues; the sequence is SVPQNPNNKNE. Residues 155–164 show a composition bias toward basic and acidic residues; the sequence is SKPEWSRDSH. Positions 165-187 are enriched in polar residues; sequence NPSTVLASQASGQPNKMQTLTQD. Composition is skewed to polar residues over residues 377–396 and 403–417; these read TAGH…SQHL and QKWN…TKSV. Serine 430 is subject to Phosphoserine. Disordered stretches follow at residues 457–530, 574–726, 818–867, and 881–943; these read KAKP…KWQL, TNAS…DQEE, SLHA…IPEK, and PPCI…DKNI. Over residues 465 to 477 the composition is skewed to pro residues; it reads VNPPLATPQPPPA. Positions 478–491 are enriched in low complexity; it reads VQASGGSGSSSESE. Phosphothreonine is present on threonine 517. Basic and acidic residues predominate over residues 582–597; the sequence is EPKERPLLSLIREKAR. Residues 615 to 625 show a composition bias toward polar residues; that stretch reads STTSETVSQRT. The span at 655 to 668 shows a compositional bias: basic and acidic residues; the sequence is PKEKESVELHDPPR. Residues 669-679 show a composition bias toward basic residues; that stretch reads GRNKATAHKPA. Residues 857–867 show a composition bias toward basic and acidic residues; sequence PIEVAEKIPEK. Composition is skewed to pro residues over residues 883–892 and 913–922; these read CISPAPPHKP and FPPPLSPLPE.

Belongs to the AF4 family. As to expression, brain (most abundant in hippocampus and amygdala), placenta and lung.

The protein resides in the nucleus speckle. Its function is as follows. RNA-binding protein. Might be involved in alternative splicing regulation through an interaction with G-quartet RNA structure. This Homo sapiens (Human) protein is AF4/FMR2 family member 2.